A 418-amino-acid polypeptide reads, in one-letter code: NADH-quinone oxidoreductase subunit H (418 aa).

9 helical membrane passes run 15-35 (LVLGKALAIFVFLMLNVLVAI), 83-103 (FVYFAAPVISTIPAFTAFAFI), 123-143 (LPVAVLFILGLSAIGVYGIVL), 164-184 (VISYEVAMGLSFAAVFLYAGS), 197-217 (VWFVFLLLPSFVIYLISMVGE), 262-282 (LATALFFGGWHAPWPLNMWAG), 287-307 (WWPVLWFTAKMWTFLFIYFWL), 321-341 (GLGWKLLIPASLVWVLIAAVI), and 349-369 (YAHWTPILVISSIVFAAALVL). The disordered stretch occupies residues 394-418 (AAHRAGFHPGIPDTAAAGESAGGRE).

Belongs to the complex I subunit 1 family. As to quaternary structure, NDH-1 is composed of 14 different subunits. Subunits NuoA, H, J, K, L, M, N constitute the membrane sector of the complex.

It is found in the cell membrane. It carries out the reaction a quinone + NADH + 5 H(+)(in) = a quinol + NAD(+) + 4 H(+)(out). Functionally, NDH-1 shuttles electrons from NADH, via FMN and iron-sulfur (Fe-S) centers, to quinones in the respiratory chain. The immediate electron acceptor for the enzyme in this species is believed to be menaquinone. Couples the redox reaction to proton translocation (for every two electrons transferred, four hydrogen ions are translocated across the cytoplasmic membrane), and thus conserves the redox energy in a proton gradient. This subunit may bind ubiquinone. This chain is NADH-quinone oxidoreductase subunit H, found in Mycobacterium avium (strain 104).